The following is a 251-amino-acid chain: Homeobox protein notochord (251 aa).

Positions 1–14 (MPSPRPRGSPPPAP) are enriched in pro residues. The interval 1-47 (MPSPRPRGSPPPAPSGSRVRPPRSGRSPAPRSPTGPNTPRAPGRFES) is disordered. Low complexity predominate over residues 15 to 35 (SGSRVRPPRSGRSPAPRSPTG). A DNA-binding region (homeobox) is located at residues 156-215 (QKRVRTMFNLEQLEELEKVFAKQHNLVGKKRAQLAARLKLTENQVRVWFQNRRVKYQKQQ). Residues 224-242 (AEAASLDEPSSSSIASIQS) are compositionally biased toward low complexity. Residues 224 to 251 (AEAASLDEPSSSSIASIQSDDAESGVDG) are disordered.

It is found in the nucleus. Transcription regulator acting downstream of both FOXA2 and Brachyury (T) during notochord development. Required for node morphogenesis. Is essential for cilia formation in the posterior notochord (PNC) and for left-right patterning; acts upstream of FOXJ1 and RFX3 in this process and is required for the expression of various components important for axonemal assembly and function. Plays a role in regulating axial versus paraxial cell fate. Activates the transcription of ciliary proteins C11orf97 homolog, FAM183B and SPACA9 in the embryonic ventral node. The chain is Homeobox protein notochord (NOTO) from Homo sapiens (Human).